The following is a 511-amino-acid chain: MESTQEFQVPLKTIRLTDGTEYQSYHTEGSLSDKKPSDYKNGIPKIRKEWIRTRLDRGDTNHSQMYYAKKGIITEEMRYVALRENMNPEFVRLEIACGRAILPSNRNHPELEPMIIGRNFLVKINANIGNSALGSSIEEEVEKLHWAVKWGADTVMDLSTGKNIHETREWILRNSPVPIGTVPIYQALEKVKGKAENLNIQVFLDTLEERAEQGVDYFTIHAGVLLHYIPFTANRVTGIVSRGGSILAKWCLAHHKENFLYTHFDEIIKVMKKYGVSFSLGDGLRPGSIADANDKAQFGELETLGELTKRAWEEDIQVMIEGPGHVPMHLIKENVDLQMKLCQEAPFYTLGPLVTDIAPGYDHITSAIGAAMIGWFGMAMLCYVTPKEHLGLPDKEDVKQGVIAYKIAAHAADLAKGHPGAIKRDNLLSKARFEFRWEDQFALSLDPETAKSFHDETLPQDRMKTAHFCSMCGPHFCSMNLTQELRKFAQEKGMEEKSEVTICNRKKESGK.

Substrate contacts are provided by residues Asn-127, Met-156, Tyr-185, His-221, 241–243 (SRG), 282–285 (DGLR), and Glu-321. His-325 lines the Zn(2+) pocket. Tyr-348 is a substrate binding site. His-389 is a Zn(2+) binding site. 3 residues coordinate [4Fe-4S] cluster: Cys-469, Cys-472, and Cys-477. A disordered region spans residues 492–511 (KGMEEKSEVTICNRKKESGK).

It belongs to the ThiC family. Requires [4Fe-4S] cluster as cofactor.

The enzyme catalyses 5-amino-1-(5-phospho-beta-D-ribosyl)imidazole + S-adenosyl-L-methionine = 4-amino-2-methyl-5-(phosphooxymethyl)pyrimidine + CO + 5'-deoxyadenosine + formate + L-methionine + 3 H(+). It participates in cofactor biosynthesis; thiamine diphosphate biosynthesis. In terms of biological role, catalyzes the synthesis of the hydroxymethylpyrimidine phosphate (HMP-P) moiety of thiamine from aminoimidazole ribotide (AIR) in a radical S-adenosyl-L-methionine (SAM)-dependent reaction. The sequence is that of Phosphomethylpyrimidine synthase from Leptospira borgpetersenii serovar Hardjo-bovis (strain JB197).